The primary structure comprises 118 residues: MARIAGINIPDQKHTVIALTAIFGIGRTRARAICAATSIAETAKIKELSEAQIDTLREEVAKYLVEGDLRREISMNIKRLMDLGCYRGLRHRRSLPLRGQRTKTNARTRKGPRKPIKK.

The disordered stretch occupies residues 94–118 (SLPLRGQRTKTNARTRKGPRKPIKK).

The protein belongs to the universal ribosomal protein uS13 family. Part of the 30S ribosomal subunit. Forms a loose heterodimer with protein S19. Forms two bridges to the 50S subunit in the 70S ribosome.

Functionally, located at the top of the head of the 30S subunit, it contacts several helices of the 16S rRNA. In the 70S ribosome it contacts the 23S rRNA (bridge B1a) and protein L5 of the 50S subunit (bridge B1b), connecting the 2 subunits; these bridges are implicated in subunit movement. Contacts the tRNAs in the A and P-sites. In Shewanella oneidensis (strain ATCC 700550 / JCM 31522 / CIP 106686 / LMG 19005 / NCIMB 14063 / MR-1), this protein is Small ribosomal subunit protein uS13.